The sequence spans 208 residues: Cytochrome c biogenesis ATP-binding export protein CcmA (208 aa).

Positions 3-206 constitute an ABC transporter domain; the sequence is LSGKDLTAYR…LEKFLPPQEK (204 aa). 35 to 42 lines the ATP pocket; sequence GPNGIGKS.

This sequence belongs to the ABC transporter superfamily. CcmA exporter (TC 3.A.1.107) family. As to quaternary structure, the complex is composed of two ATP-binding proteins (CcmA) and two transmembrane proteins (CcmB).

The protein localises to the cell inner membrane. It carries out the reaction heme b(in) + ATP + H2O = heme b(out) + ADP + phosphate + H(+). Part of the ABC transporter complex CcmAB involved in the biogenesis of c-type cytochromes; once thought to export heme, this seems not to be the case, but its exact role is uncertain. Responsible for energy coupling to the transport system. This Bartonella henselae (strain ATCC 49882 / DSM 28221 / CCUG 30454 / Houston 1) (Rochalimaea henselae) protein is Cytochrome c biogenesis ATP-binding export protein CcmA.